The sequence spans 431 residues: UDP-N-acetylmuramate--L-alanine ligase (431 aa).

108-114 (GSHGKTS) contributes to the ATP binding site.

The protein belongs to the MurCDEF family.

It localises to the cytoplasm. The enzyme catalyses UDP-N-acetyl-alpha-D-muramate + L-alanine + ATP = UDP-N-acetyl-alpha-D-muramoyl-L-alanine + ADP + phosphate + H(+). Its pathway is cell wall biogenesis; peptidoglycan biosynthesis. Its function is as follows. Cell wall formation. In Exiguobacterium sibiricum (strain DSM 17290 / CCUG 55495 / CIP 109462 / JCM 13490 / 255-15), this protein is UDP-N-acetylmuramate--L-alanine ligase.